The primary structure comprises 161 residues: V-type proton ATPase 16 kDa proteolipid subunit c (161 aa).

Over 1 to 15 (MSYDLATAERAAYAP) the chain is Lumenal. A helical transmembrane segment spans residues 16–36 (FFGYMGAASAQIFTVLGAAYG). Over 37-58 (TAKSAVGISSMGVMRPELIMKS) the chain is Cytoplasmic. The helical transmembrane segment at 59-79 (VIPVIMAGIIGIYGLVVAMVL) threads the bilayer. The Lumenal segment spans residues 80–98 (RGKVTSASAGYTLDKGFAH). The helical transmembrane segment at 99 to 119 (LAAGLTCGLCGLGAGYAIGIV) threads the bilayer. Residues 120-137 (GDAGVRGTAQQPRLFVGM) lie on the Cytoplasmic side of the membrane. The chain crosses the membrane as a helical span at residues 138 to 158 (ILILIFSEVLGLYGMIVALIL). The Lumenal segment spans residues 159-161 (GTS).

The protein belongs to the V-ATPase proteolipid subunit family. As to quaternary structure, V-ATPase is a heteromultimeric enzyme made up of two complexes: the ATP-hydrolytic V1 complex and the proton translocation V0 complex. The V1 complex consists of three catalytic AB heterodimers that form a heterohexamer, three peripheral stalks each consisting of EG heterodimers, one central rotor including subunits D and F, and the regulatory subunits C and H. The proton translocation complex V0 consists of the proton transport subunit a, a ring of proteolipid subunits c9c'', rotary subunit d, subunits e and f, and the accessory subunits vah-19/Ac45 and vah-20/PRR.

It localises to the membrane. In terms of biological role, proton-conducting pore forming subunit of the V0 complex of vacuolar(H+)-ATPase (V-ATPase), a multisubunit enzyme composed of a peripheral complex (V1) that hydrolyzes ATP and a membrane integral complex (V0) that translocates protons. V-ATPase is responsible for acidifying and maintaining the pH of intracellular compartments and in some cell types, is targeted to the plasma membrane, where it is responsible for acidifying the extracellular environment. In Ascaris suum (Pig roundworm), this protein is V-type proton ATPase 16 kDa proteolipid subunit c (12).